A 759-amino-acid polypeptide reads, in one-letter code: Pseudocleavage protein nop-1 (759 aa).

5 disordered regions span residues M1–F46, K334–K361, L379–Q413, Q440–R495, and E732–I759. Basic and acidic residues predominate over residues D10 to R42. Positions T448 to S465 are enriched in low complexity. Positions G473 to R482 are enriched in polar residues. Basic and acidic residues predominate over residues S485 to R495. Residues P736–I759 show a composition bias toward polar residues.

The protein resides in the nucleus. Its subcellular location is the cytoplasm. It localises to the cell cortex. The protein localises to the cleavage furrow. In terms of biological role, required for formation of the pseudocleavage furrow during the first cleavage of the embryo and also mediates aster-induced furrowing during cytokinesis. Promotes cortical recruitment of ani-1 and nmy-2 during pseudocleavage and cytokinesis and promotes the accumulation of actin at furrowing regions. Regulates establishment of embryonic cell polarity. The sequence is that of Pseudocleavage protein nop-1 (nop-1) from Caenorhabditis elegans.